Reading from the N-terminus, the 309-residue chain is Ribosomal RNA small subunit methyltransferase H (309 aa).

S-adenosyl-L-methionine is bound by residues 33 to 35, Asp-53, Phe-79, Asp-100, and Gln-107; that span reads GGH.

The protein belongs to the methyltransferase superfamily. RsmH family.

Its subcellular location is the cytoplasm. It catalyses the reaction cytidine(1402) in 16S rRNA + S-adenosyl-L-methionine = N(4)-methylcytidine(1402) in 16S rRNA + S-adenosyl-L-homocysteine + H(+). Functionally, specifically methylates the N4 position of cytidine in position 1402 (C1402) of 16S rRNA. The sequence is that of Ribosomal RNA small subunit methyltransferase H from Clostridium botulinum (strain Langeland / NCTC 10281 / Type F).